Here is a 97-residue protein sequence, read N- to C-terminus: RxLR effector protein PexRD21 (97 aa).

The N-terminal stretch at 1–21 is a signal peptide; it reads MRLSYILVVVIAVTLQACVCA. Positions 48-66 match the RxLR-dEER motif; that stretch reads RLLRGVKKRTAEREVQEER.

Belongs to the RxLR effector family.

It localises to the secreted. Its subcellular location is the host cell membrane. In terms of biological role, effector that is involved in host plant infection. Contributes to virulence during the early infection stage, by inhibiting plant defense responses induced by both PAMP-triggered immunity (PTI) and effector-triggered immunity (ETI). This is RxLR effector protein PexRD21 from Phytophthora infestans (strain T30-4) (Potato late blight agent).